Reading from the N-terminus, the 382-residue chain is Galactokinase (382 aa).

A substrate-binding site is contributed by 34–37 (EHTD). An ATP-binding site is contributed by 124 to 130 (GAGLSSS). Residues Ser130 and Glu162 each coordinate Mg(2+). Residue Asp174 is the Proton acceptor of the active site. Tyr223 lines the substrate pocket.

The protein belongs to the GHMP kinase family. GalK subfamily.

The protein localises to the cytoplasm. It carries out the reaction alpha-D-galactose + ATP = alpha-D-galactose 1-phosphate + ADP + H(+). It participates in carbohydrate metabolism; galactose metabolism. Its function is as follows. Catalyzes the transfer of the gamma-phosphate of ATP to D-galactose to form alpha-D-galactose-1-phosphate (Gal-1-P). The sequence is that of Galactokinase from Enterobacter sp. (strain 638).